Consider the following 534-residue polypeptide: MAAHRFSSLLSRSVPLLSRGGKQSYLGRGVYRYGTAAAAALEEPIKPPVSVQYDKLLINGQFVDAASGKTFPTLDPRSGEVIAHVAEGDAEDINRAVAAARKAFDEGPWPKMPAYERQKIMLRFADLVEKHNDEVAALEAWDSGKPYEQCAQVEIPMFVRLFRYYAGWADKIHGLTIPADGPHHVQTLHEPIGVAGQIIPWNFPLVMFGWKVGPALACGNSVVLKTAEQTPLSALLVSKLFHEAGLPEGVLNIVSGFGPTAGAALCRHMDVDKLAFTGSTETGKIVLELSAKSNLKPVTLELGGKSPFIVCEDADVDKAVELAHFALFFNQGQCCCAGSRTFVHEKVYDEFVEKAKARALKRTVGDPFKAGMEQGPQVDADQFEKILKYIRSGAESGATLETGGDRLGTKGYYIQPTVFSDVKDDMLIAKDEIFGPVQTILKFKELDEVIRRANNSSYGLAAGVFTQNLDTANTMMRALRAGTVWINCFDTFDAAIPFGGYKMSGIGREKGEYSLKNYLQVKAVVTALKNPAWL.

A mitochondrion-targeting transit peptide spans 1-29; it reads MAAHRFSSLLSRSVPLLSRGGKQSYLGRG. Residues 199–202, 225–228, 258–259, 278–279, and 301–303 each bind NAD(+); these read IPWN, KTAE, GP, GS, and ELG. The Proton acceptor role is filled by Glu301. Residue Cys335 is the Nucleophile of the active site. NAD(+) contacts are provided by residues 381 to 385 and 432 to 434; these read DQFEK and EIF.

It belongs to the aldehyde dehydrogenase family. In terms of assembly, homotetramer. As to expression, expressed predominantly in the upper and lower flower petal lobes, and, at low levels, in flower tubes, pistils, stamens and sepals.

The protein localises to the mitochondrion. It catalyses the reaction an aldehyde + NAD(+) + H2O = a carboxylate + NADH + 2 H(+). The catalysed reaction is acetaldehyde + NAD(+) + H2O = acetate + NADH + 2 H(+). It carries out the reaction benzaldehyde + NAD(+) + H2O = benzoate + NADH + 2 H(+). The enzyme catalyses 2-phenylacetaldehyde + NAD(+) + H2O = 2-phenylacetate + NADH + 2 H(+). Its pathway is aromatic compound metabolism. With respect to regulation, inhibited by disulfiram. Its function is as follows. Component of the floral volatile benzenoid/phenylpropanoid (FVBP) biosynthetic pathway. Catalyzes the oxidation of benzaldehyde to benzoic acid (BA). Capable of oxidizing a broad spectrum of aliphatic aldehydes; increased carbon chain length results in a decrease in its efficiency. This Antirrhinum majus (Garden snapdragon) protein is Benzaldehyde dehydrogenase, mitochondrial.